The primary structure comprises 633 residues: Chaperone protein HtpG (633 aa).

Positions 1–344 (MSLQPQAETL…SNDLPLNISR (344 aa)) are a; substrate-binding. Positions 345 to 560 (ELLQSNEVIN…ENEMSGHLQR (216 aa)) are b. The tract at residues 561-633 (LLIQTGQDFM…KGLNELLLDS (73 aa)) is c.

The protein belongs to the heat shock protein 90 family. As to quaternary structure, homodimer.

The protein localises to the cytoplasm. Functionally, molecular chaperone. Has ATPase activity. The polypeptide is Chaperone protein HtpG (Coxiella burnetii (strain RSA 331 / Henzerling II)).